The sequence spans 188 residues: Adenine phosphoribosyltransferase (188 aa).

The protein belongs to the purine/pyrimidine phosphoribosyltransferase family. As to quaternary structure, homodimer.

Its subcellular location is the cytoplasm. The catalysed reaction is AMP + diphosphate = 5-phospho-alpha-D-ribose 1-diphosphate + adenine. It functions in the pathway purine metabolism; AMP biosynthesis via salvage pathway; AMP from adenine: step 1/1. Functionally, catalyzes a salvage reaction resulting in the formation of AMP, that is energically less costly than de novo synthesis. The protein is Adenine phosphoribosyltransferase of Neisseria meningitidis serogroup B (strain ATCC BAA-335 / MC58).